The primary structure comprises 131 residues: Large ribosomal subunit protein bL19 (131 aa).

The tract at residues 107–131 is disordered; sequence GKSARIAERAERGSDKGKAAPAAAE. The span at 111–124 shows a compositional bias: basic and acidic residues; that stretch reads RIAERAERGSDKGK.

This sequence belongs to the bacterial ribosomal protein bL19 family.

In terms of biological role, this protein is located at the 30S-50S ribosomal subunit interface and may play a role in the structure and function of the aminoacyl-tRNA binding site. This is Large ribosomal subunit protein bL19 from Methylobacterium sp. (strain 4-46).